The following is a 177-amino-acid chain: 18.9 kDa heat shock protein (177 aa).

The segment at 1–35 is disordered; sequence MSMITSMLGRKQNAQQKGGGGGGRTGGGGGGEIEP. Over residues 17-32 the composition is skewed to gly residues; sequence KGGGGGGRTGGGGGGE. Residues 63-177 enclose the sHSP domain; the sequence is AAGVPSTASM…PHARIIPITN (115 aa).

It belongs to the small heat shock protein (HSP20) family. May form oligomeric structures.

Its subcellular location is the cytoplasm. The protein is 18.9 kDa heat shock protein (HSP18.9) of Oryza sativa subsp. japonica (Rice).